Here is a 155-residue protein sequence, read N- to C-terminus: Interleukin-2 (155 aa).

The first 20 residues, 1-20 (MYKMQLLSCIALMLVLVANS), serve as a signal peptide directing secretion. O-linked (GalNAc...) threonine glycosylation is present at Thr-24. An intrachain disulfide couples Cys-79 to Cys-127. Residue Asn-112 is glycosylated (N-linked (GlcNAc...) asparagine).

This sequence belongs to the IL-2 family.

Its subcellular location is the secreted. Cytokine produced by activated CD4-positive helper T-cells and to a lesser extend activated CD8-positive T-cells and natural killer (NK) cells that plays pivotal roles in the immune response and tolerance. Binds to a receptor complex composed of either the high-affinity trimeric IL-2R (IL2RA/CD25, IL2RB/CD122 and IL2RG/CD132) or the low-affinity dimeric IL-2R (IL2RB and IL2RG). Interaction with the receptor leads to oligomerization and conformation changes in the IL-2R subunits resulting in downstream signaling starting with phosphorylation of JAK1 and JAK3. In turn, JAK1 and JAK3 phosphorylate the receptor to form a docking site leading to the phosphorylation of several substrates including STAT5. This process leads to activation of several pathways including STAT, phosphoinositide-3-kinase/PI3K and mitogen-activated protein kinase/MAPK pathways. Functions as a T-cell growth factor and can increase NK-cell cytolytic activity as well. Promotes strong proliferation of activated B-cells and subsequently immunoglobulin production. Plays a pivotal role in regulating the adaptive immune system by controlling the survival and proliferation of regulatory T-cells, which are required for the maintenance of immune tolerance. Moreover, participates in the differentiation and homeostasis of effector T-cell subsets, including Th1, Th2, Th17 as well as memory CD8-positive T-cells. This chain is Interleukin-2 (IL2), found in Vulpes vulpes (Red fox).